Reading from the N-terminus, the 166-residue chain is Protein-export protein SecB (166 aa).

This sequence belongs to the SecB family. Homotetramer, a dimer of dimers. One homotetramer interacts with 1 SecA dimer.

Its subcellular location is the cytoplasm. One of the proteins required for the normal export of preproteins out of the cell cytoplasm. It is a molecular chaperone that binds to a subset of precursor proteins, maintaining them in a translocation-competent state. It also specifically binds to its receptor SecA. This Actinobacillus pleuropneumoniae serotype 5b (strain L20) protein is Protein-export protein SecB.